A 360-amino-acid polypeptide reads, in one-letter code: Geranylgeranyl pyrophosphate synthase 9, chloroplastic (360 aa).

A chloroplast-targeting transit peptide spans 1–39; it reads MATTVHLSSSSLFSQSRGRRDNSISSVKSLRKRTVLSLS. The isopentenyl diphosphate site is built by Lys-106, Arg-109, and His-138. Mg(2+)-binding residues include Asp-145 and Asp-151. Arg-156 is a binding site for dimethylallyl diphosphate. Arg-157 is an isopentenyl diphosphate binding site. Residues Lys-245, Thr-246, Gln-283, Lys-300, and Lys-310 each coordinate dimethylallyl diphosphate.

It belongs to the FPP/GGPP synthase family. In terms of assembly, monomer. No interactions with GGR. Mg(2+) serves as cofactor.

It is found in the plastid. It localises to the chloroplast. It catalyses the reaction isopentenyl diphosphate + dimethylallyl diphosphate = (2E)-geranyl diphosphate + diphosphate. The catalysed reaction is isopentenyl diphosphate + (2E)-geranyl diphosphate = (2E,6E)-farnesyl diphosphate + diphosphate. It carries out the reaction isopentenyl diphosphate + (2E,6E)-farnesyl diphosphate = (2E,6E,10E)-geranylgeranyl diphosphate + diphosphate. The protein operates within isoprenoid biosynthesis; farnesyl diphosphate biosynthesis; farnesyl diphosphate from geranyl diphosphate and isopentenyl diphosphate: step 1/1. It participates in isoprenoid biosynthesis; geranyl diphosphate biosynthesis; geranyl diphosphate from dimethylallyl diphosphate and isopentenyl diphosphate: step 1/1. Its pathway is isoprenoid biosynthesis; geranylgeranyl diphosphate biosynthesis; geranylgeranyl diphosphate from farnesyl diphosphate and isopentenyl diphosphate: step 1/1. Functionally, catalyzes the trans-addition of the three molecules of IPP onto DMAPP to form geranylgeranyl pyrophosphate. In Arabidopsis thaliana (Mouse-ear cress), this protein is Geranylgeranyl pyrophosphate synthase 9, chloroplastic (GGPPS9).